The chain runs to 69 residues: Small integral membrane protein 20 (69 aa).

The Mitochondrial matrix portion of the chain corresponds to 1–8; it reads MAAARNLR. Residues 9–29 traverse the membrane as a helical segment; the sequence is TALIFGGFISMVGAAFYPIYF. The Mitochondrial intermembrane portion of the chain corresponds to 30–69; it reads RPLMRLEEYQKEQAVNRAGIVQEDVQPPGLKVWSDPFGRK. Position 66 is a phenylalanine amide (Phe-66).

In terms of assembly, component of the MITRAC (mitochondrial translation regulation assembly intermediate of cytochrome c oxidase complex) complex, the core components of this complex being COA3/MITRAC12 and COX14. Interacts with COA3/MITRAC12 and COX4I1. Directly interacts with newly synthesized MT-CO1/COX1. As to expression, highly expressed in the hypothalamus, the spinal cord, and sensory ganglia (at protein level). Also expressed on in the epidermis and dermis layers of the skin (at protein level). Expressed in preadipocytes and adipocytes (at protein level). Expressed in the ovary, specifically in granulosa cells of follicles that have passed the primary stage and in oocytes (at protein level).

It is found in the mitochondrion inner membrane. The protein resides in the secreted. Functionally, component of the MITRAC (mitochondrial translation regulation assembly intermediate of cytochrome c oxidase complex) complex, that regulates cytochrome c oxidase assembly. Promotes the progression of complex assembly after the association of MT-CO1/COX1 with COX4I1 and COX6C. Chaperone-like assembly factor required to stabilize newly synthesized MT-CO1/COX1 and to prevent its premature turnover. Peptide involved in a broad spectrum of regulatory functions. Is a ligand for GPR173. As part of the reproductive cycle, it regulates gonadotropin-releasing hormone (GnRH) signaling in the hypothalamus and pituitary gland which augments the release of luteinizing hormone. More specifically, it regulates the expression of transcription factors CEBPB and POU2F1/OCT1 through the cAMP-PKA signaling pathway, which subsequently regulate the expression of GNRHR and KISS1. Plays a protective role in memory retention through activation of GNRHR. Regulates the secretion of AVP by hypothalamic neurons. Plays a role in the transduction of the itch sensation. Induces anxiolytic effects, reducing behavior associated with anxiety. Regulates food intake as well as satiation and satiety by increasing Nucb2 expression in neurons. In the ovary, it regulates follicular growth by stimulating granulosa cell proliferation by increasing the expression of GPR173, CREB1, CYP19A1, KITLG, FSHR, and LHCGR. It also increases the production of estradiol (E2). In the heart, it regulates contractility and relaxation by activating the AKT1-NOS3 and MAPK1-MAPK3 signaling pathways. It also plays a cardioprotective role during ischemia, where it activates the SAFE and RISK pathways. Stimulates the proliferation and differentiation of preadipocytes. In pancreatic islet cells, it induces proliferation of islet cells as well as the production of INS through activation of the MAPK1-MAPK3 signaling pathways. This chain is Small integral membrane protein 20, found in Mus musculus (Mouse).